A 314-amino-acid chain; its full sequence is Coiled-coil domain-containing protein 42 like-2 (314 aa).

2 coiled-coil regions span residues arginine 34 to lysine 139 and asparagine 175 to arginine 233.

The protein belongs to the CFAP73 family.

This is Coiled-coil domain-containing protein 42 like-2 from Xenopus laevis (African clawed frog).